Here is a 1013-residue protein sequence, read N- to C-terminus: MSRKYRKKLSRDDIRAVGFDFIEFLDDRETRSTTDRNTLKEIYNEQFRDRDGVRDPNFSSVLFALTRSSRTRVTRSEVFFDKKIRVRQNDQWSRPYRSQQNHATPHLNDAISRPSTTRVSDPSSVPEPENRVIARRRLAKTIMRQGNSEDMSVFFADKYGVRVSSELQIEDGKIHWCVEGAEVHELKLFVENTGQEAILFTCFSALHYLQYFTLDDSQRVRKDNPHRLEPNETYEVILRFKSDQIGVYPATLAFEFKENQDTRPFHIVRFIEAQHRSELTAQLGPTEPFRPKRLDTNQPMKWSIDEGFKPESSSQNFLKFVVPLDNYNCPSYTSALIEVLKGNRSSGKQLQEHQLTLESDLSFNNYMDRFDLLLYLEEDQMRMDIKRYNKKDVSMVRDRDKKLLVLELPGVSENRPSVLRGDHLLLTKSEELQNSNVTKYKGYVHRVELDQVKLGFSKRLLERFIDNMKFSVEFTINRLPLRLQHRAVHMVVQHHLKDVLFPVASRRLNPVSPSALRLFDQKLEKNPEQKTAVCNIVAGTSKPAPYLVFGPPGTGKTVTIVEAIKQVEKNTGGARILACAPSNSAADQLGEKLITSQHVDARNIYRIYASSRNPKEIPKVLENNSNVEGENIIFPCKEDLMPYKIVVCTLVTAGRLVSGGFPVGHFSHIFVDEAGHAVEPEIVISVAGLLNAETGQLVLAGDPKQLGPILRSPFAIKYGLGLSLLERLMTQNELYQKGDTGFDNRYVTKLLQNYRSHPSILKVPNELFYDNELKACADEISSRQYCTWEHLPKRGFPVIFHGVVGKDERESTSPSFFNTSEIDKIMDYLKKLLLTQAKKGIAKISPKDIGIIAPYRKQVEKIRQAIKIHRELKSLSGIEELKVGSVEEFQGQERKVIIVSTVRSSKEHIILDDKFNIGFLKNEKRFNVAVTRAKALLIMVGNPIILRTDEIWGRFMNYCIQERGYTGYDITHLEETDVIAERLLSLNIRQEITVETEESVVQQFLSPPWRHEH.

2 stretches are compositionally biased toward polar residues: residues 91 to 103 (QWSR…QNHA) and 113 to 123 (RPSTTRVSDPS). A disordered region spans residues 91–129 (QWSRPYRSQQNHATPHLNDAISRPSTTRVSDPSSVPEPE). ATP is bound at residue 550 to 557 (GPPGTGKT). The DEAG box signature appears at 672–675 (DEAG).

It belongs to the DNA2/NAM7 helicase family. SDE3 subfamily.

Its subcellular location is the cytoplasm. The protein localises to the P-body. The enzyme catalyses ATP + H2O = ADP + phosphate + H(+). Probable RNA helicase. Required for RNA-mediated gene silencing by the RNA-induced silencing complex (RISC). Required for both miRNA-mediated translational repression and miRNA-mediated cleavage of complementary mRNAs by RISC. The chain is Putative helicase mov-10-B.1 (mov10b.1) from Danio rerio (Zebrafish).